The primary structure comprises 320 residues: Uroplakin-3b (320 aa).

An N-terminal signal peptide occupies residues 1-29 (MGLPWGQPHLGLQMLLLALNCLRPSLSLG). The Lumenal segment spans residues 30 to 240 (EWGSWMDASS…LHPLFSGRPP (211 aa)). An N-linked (GlcNAc...) asparagine glycan is attached at asparagine 133. The chain crosses the membrane as a helical span at residues 241–266 (TLGLLGSLYHALLQPVVAGGGPGAAA). Residues 267–320 (DRLLHGQALHDPPHPTQRGRHTAGGLQAWPGPPPQPQPLAWPLCMGLGEMGRWE) lie on the Cytoplasmic side of the membrane. The segment at 273–303 (QALHDPPHPTQRGRHTAGGLQAWPGPPPQPQ) is disordered.

This sequence belongs to the uroplakin-3 family. Heterodimer with uroplakin-1B (UPK1B).

It is found in the cell membrane. Its function is as follows. Component of the asymmetric unit membrane (AUM); a highly specialized biomembrane elaborated by terminally differentiated urothelial cells. May play an important role in AUM-cytoskeleton interaction in terminally differentiated urothelial cells. It also contributes to the formation of urothelial glycocalyx which may play an important role in preventing bacterial adherence. This chain is Uroplakin-3b (UPK3B), found in Homo sapiens (Human).